A 192-amino-acid chain; its full sequence is Phosphoheptose isomerase (192 aa).

An SIS domain is found at 35–192 (LIETLENQGK…CIERHFAHKN (158 aa)). 50–52 (NGG) is a substrate binding site. Zn(2+) contacts are provided by H59 and E63. Substrate is bound by residues E63, 92–93 (ND), 118–120 (STS), S123, and Q170. Positions 170 and 178 each coordinate Zn(2+).

This sequence belongs to the SIS family. GmhA subfamily. In terms of assembly, homotetramer. Zn(2+) is required as a cofactor.

The protein resides in the cytoplasm. It carries out the reaction 2 D-sedoheptulose 7-phosphate = D-glycero-alpha-D-manno-heptose 7-phosphate + D-glycero-beta-D-manno-heptose 7-phosphate. It functions in the pathway carbohydrate biosynthesis; D-glycero-D-manno-heptose 7-phosphate biosynthesis; D-glycero-alpha-D-manno-heptose 7-phosphate and D-glycero-beta-D-manno-heptose 7-phosphate from sedoheptulose 7-phosphate: step 1/1. Catalyzes the isomerization of sedoheptulose 7-phosphate in D-glycero-D-manno-heptose 7-phosphate. The chain is Phosphoheptose isomerase from Helicobacter pylori (strain P12).